The sequence spans 183 residues: Acireductone dioxygenase (183 aa).

Positions 99, 101, 105, and 144 each coordinate Fe(2+). The Ni(2+) site is built by H99, H101, E105, and H144.

The protein belongs to the acireductone dioxygenase (ARD) family. Monomer. Fe(2+) serves as cofactor. It depends on Ni(2+) as a cofactor.

It carries out the reaction 1,2-dihydroxy-5-(methylsulfanyl)pent-1-en-3-one + O2 = 3-(methylsulfanyl)propanoate + CO + formate + 2 H(+). The enzyme catalyses 1,2-dihydroxy-5-(methylsulfanyl)pent-1-en-3-one + O2 = 4-methylsulfanyl-2-oxobutanoate + formate + 2 H(+). It functions in the pathway amino-acid biosynthesis; L-methionine biosynthesis via salvage pathway; L-methionine from S-methyl-5-thio-alpha-D-ribose 1-phosphate: step 5/6. In terms of biological role, catalyzes 2 different reactions between oxygen and the acireductone 1,2-dihydroxy-3-keto-5-methylthiopentene (DHK-MTPene) depending upon the metal bound in the active site. Fe-containing acireductone dioxygenase (Fe-ARD) produces formate and 2-keto-4-methylthiobutyrate (KMTB), the alpha-ketoacid precursor of methionine in the methionine recycle pathway. Ni-containing acireductone dioxygenase (Ni-ARD) produces methylthiopropionate, carbon monoxide and formate, and does not lie on the methionine recycle pathway. The sequence is that of Acireductone dioxygenase from Microcystis aeruginosa (strain NIES-843 / IAM M-2473).